The following is a 432-amino-acid chain: Bouquet formation protein 4 (432 aa).

Residues 1-21 are disordered; the sequence is MTENEKSRSLPAERNPLYKDD. Residues 38–147 enclose the HTH APSES-type domain; sequence EFPDGPATFV…SSTPSTYATP (110 aa). A DNA-binding region (H-T-H motif) is located at residues 73–94; sequence ATSMFRSAFPKATQEEEDLEMR. 2 stretches are compositionally biased toward low complexity: residues 139 to 152 and 163 to 172; these read STPS…RPTA and ESSTSATTTS. Disordered stretches follow at residues 139 to 283 and 364 to 384; these read STPS…GKIR and KSSI…FEEN. A compositionally biased stretch (basic and acidic residues) spans 180–228; it reads RLAEHLENSKKTILQHDNKEEDKEIHSEENETKDEIKSEKKEPEIKKQE. Positions 229 to 241 are enriched in polar residues; it reads GGSSTEKVGQPSS.

As to quaternary structure, interacts with rap1.

The protein localises to the cytoplasm. It is found in the nucleus. Its subcellular location is the nucleus inner membrane. Functionally, connects telomeres to the nuclear envelop (NE) during both vegetative growth and meiosis. This connection ensures clustering of telomeres to the spindle pole body (SPB) when cells enter meiotic prophase. The protein is Bouquet formation protein 4 (bqt4) of Schizosaccharomyces pombe (strain 972 / ATCC 24843) (Fission yeast).